Reading from the N-terminus, the 222-residue chain is Ribosome maturation factor RimM (222 aa).

Positions 1–22 (MTERKQGAARPLNRPLVQPQGE) are disordered. Residues 145–222 (EDEFYWVDLI…RIVVDWGLDY (78 aa)) form the PRC barrel domain.

It belongs to the RimM family. Binds ribosomal protein uS19.

The protein localises to the cytoplasm. Its function is as follows. An accessory protein needed during the final step in the assembly of 30S ribosomal subunit, possibly for assembly of the head region. Essential for efficient processing of 16S rRNA. May be needed both before and after RbfA during the maturation of 16S rRNA. It has affinity for free ribosomal 30S subunits but not for 70S ribosomes. The polypeptide is Ribosome maturation factor RimM (Cupriavidus necator (strain ATCC 17699 / DSM 428 / KCTC 22496 / NCIMB 10442 / H16 / Stanier 337) (Ralstonia eutropha)).